A 1133-amino-acid polypeptide reads, in one-letter code: Protein TOPLESS-RELATED PROTEIN 2 (1133 aa).

A LisH domain is found at 4-36 (LSRELVFLILQFLDEEKFKETVHKLEQESAFYF). A CTLH domain is found at 34 to 92 (FYFNMKHFEDLVQGGEWDEVEKYLSGFTKVEDNRYSMKIFFEIRKQKYLEALDRHDRAK). WD repeat units follow at residues 344-384 (NQGS…RIAH), 451-492 (AHIG…KQYT), 495-536 (GHEA…SRVD), 539-582 (APGH…IKRT), 586-625 (FRKRSLGVVQFDTTRNRFLAAGDEFVVKFWDMDNTNILTT), 630-669 (GGLPASPRLRFNREGSLLAVTANENGIKILANTDGQRLLR), 771-810 (ATSSKVVRLLYTNNGVALLALGSNAVHKLWKWQRTDRNPN), 838-876 (NPEEATACIALSKNDSYVMSASGGKVSLFNMMTFKVMTT), 879-919 (APPP…VKSK), 922-961 (GHSKKITGLAFSQSMNMLVSSGADAQLCAWSIDGWEKKKS), 970-1011 (RSGA…RSWS), and 1015-1054 (ALPAPISSAIYSCDGLLIYAGFCDGAIGVFEAESLRLRCR). A disordered region spans residues 1102-1133 (DSDPKWGVAPPQDNGTHPTISAAPAAANKPEV).

In terms of assembly, tetramer. Interacts with D53, probably via the EAR motifs. Binds to AP2-1/TOE1, AP2-3/SNB and AP2-2/IDS1. Interacts with WOX1. Interacts with MOF1. Expressed in stems and panicles. Detected in roots, seeds, leaves and sheath. Expressed in the meristem and lateral organ primordia.

The protein resides in the nucleus. Functionally, transcriptional corepressor involved in branch formation regulation, presumably by suppressing primary branch formation and promoting secondary branch formation. Required for the cell elongation in the first internode and pollen development. Probable downstream regulator of strigolactones signaling important in axillary meristem maintenance. Acts in auxin signaling and is associated with the regulation of histone deacetylation. Essential for the function of miR172 microRNA and its target genes in regulating panicle development. The protein is Protein TOPLESS-RELATED PROTEIN 2 of Oryza sativa subsp. japonica (Rice).